Reading from the N-terminus, the 442-residue chain is 26S proteasome non-ATPase regulatory subunit 12 homolog A (442 aa).

Residues K6–A137 adopt a coiled-coil conformation. The 172-residue stretch at E232 to D403 folds into the PCI domain.

The protein belongs to the proteasome subunit p55 family. In terms of assembly, component of the 19S regulatory particle (RP/PA700) lid subcomplex of the 26S proteasome. The 26S proteasome is composed of a core protease (CP), known as the 20S proteasome, capped at one or both ends by the 19S regulatory particle (RP/PA700). The RP/PA700 complex is composed of at least 17 different subunits in two subcomplexes, the base and the lid, which form the portions proximal and distal to the 20S proteolytic core, respectively. Ubiquitous with highest expression in flowers.

It localises to the cytoplasm. It is found in the nucleus. Its function is as follows. Acts as a regulatory subunit of the 26 proteasome which is involved in the ATP-dependent degradation of ubiquitinated proteins. Required for gametogenesis and sporophyte development. Acts redundantly with RPN5B. This Arabidopsis thaliana (Mouse-ear cress) protein is 26S proteasome non-ATPase regulatory subunit 12 homolog A (RPN5A).